The following is a 511-amino-acid chain: Zinc finger and BTB domain-containing protein 45 (511 aa).

A BTB domain is found at 33 to 96 (CDVTVRIREA…LYSGSLVVAQ (64 aa)). Over residues 159-168 (ARPPGHPGAA) the composition is skewed to low complexity. Disordered regions lie at residues 159–241 (ARPP…PDCA) and 294–403 (EDGA…PPTY). The segment covering 206–224 (RGDEDDEESDDETDGEDGE) has biased composition (acidic residues). The segment covering 339-360 (PGPPAPPPSAPSGPAPAPPPAF) has biased composition (pro residues). Low complexity predominate over residues 378-397 (PAPSAAPTTAPSGTPARTPG). 4 consecutive C2H2-type zinc fingers follow at residues 403–425 (YECSHCRKTFSSRKNYTKHMFIH), 431–453 (HQCAVCWRSFSLRDYLLKHMVTH), 459–481 (FQCAVCAKRFTQKSSLNVHMRTH), and 486–508 (APCPACGKVFSHRALLERHLAAH).

It belongs to the krueppel C2H2-type zinc-finger protein family.

The protein resides in the nucleus. Functionally, may be involved in transcriptional regulation. In the central nervous system, may play a role in glial cell differentiation. The sequence is that of Zinc finger and BTB domain-containing protein 45 (ZBTB45) from Homo sapiens (Human).